Here is a 558-residue protein sequence, read N- to C-terminus: Urocanate hydratase (558 aa).

Residues 54–55, Gln132, 178–180, Glu198, 244–245, 265–269, 275–276, and Tyr324 contribute to the NAD(+) site; these read GG, GMG, NA, QTSAH, and YL. Residue Cys412 is part of the active site. Gly494 serves as a coordination point for NAD(+).

This sequence belongs to the urocanase family. It depends on NAD(+) as a cofactor.

The protein resides in the cytoplasm. It catalyses the reaction 4-imidazolone-5-propanoate = trans-urocanate + H2O. It participates in amino-acid degradation; L-histidine degradation into L-glutamate; N-formimidoyl-L-glutamate from L-histidine: step 2/3. Its function is as follows. Catalyzes the conversion of urocanate to 4-imidazolone-5-propionate. This chain is Urocanate hydratase, found in Acinetobacter baumannii (strain SDF).